The chain runs to 212 residues: ATP-dependent Clp protease proteolytic subunit (212 aa).

Catalysis depends on serine 106, which acts as the Nucleophile. Histidine 131 is an active-site residue.

This sequence belongs to the peptidase S14 family. As to quaternary structure, fourteen ClpP subunits assemble into 2 heptameric rings which stack back to back to give a disk-like structure with a central cavity, resembling the structure of eukaryotic proteasomes.

It is found in the cytoplasm. The enzyme catalyses Hydrolysis of proteins to small peptides in the presence of ATP and magnesium. alpha-casein is the usual test substrate. In the absence of ATP, only oligopeptides shorter than five residues are hydrolyzed (such as succinyl-Leu-Tyr-|-NHMec, and Leu-Tyr-Leu-|-Tyr-Trp, in which cleavage of the -Tyr-|-Leu- and -Tyr-|-Trp bonds also occurs).. Cleaves peptides in various proteins in a process that requires ATP hydrolysis. Has a chymotrypsin-like activity. Plays a major role in the degradation of misfolded proteins. The protein is ATP-dependent Clp protease proteolytic subunit of Rhodopseudomonas palustris (strain ATCC BAA-98 / CGA009).